We begin with the raw amino-acid sequence, 102 residues long: PqqA binding protein (102 aa).

It belongs to the PqqD family. In terms of assembly, monomer. Interacts with PqqE.

It participates in cofactor biosynthesis; pyrroloquinoline quinone biosynthesis. Functions as a PqqA binding protein and presents PqqA to PqqE, in the pyrroloquinoline quinone (PQQ) biosynthetic pathway. The protein is PqqA binding protein of Rhodopseudomonas palustris (strain HaA2).